The following is a 1032-amino-acid chain: MIRDLGKVGKVSLLLDHIWTGILLYTVILTPADCYNIDESSPMLFKGSPGSLFGFSVVLHSNGEGNWIVVGAPQSSWTTKNVSNPGAILKCKIQQNPNRTCDGLELGNQNGAKCGKTCKEEQDNQWLGVSLSRQPTKDGQILACGHRWKNTHFMLSDHKLPYGVCYGIPADFRTELSKRICPCYKDHVRKFGDRYGSCQAGISTFYVEDVIIMGAPGSFYWTGSIFVYNTTENTIKSYVDLNNAVKFGSYLGYSVGAGHFRTPNGYDVIGGAPQQEQTGRVYIFTYEEKQLTILFEAGGKKLGSYFGAAVCAADLNGDGLSDLLVGAPIQSTIREEGRVFVYMNTGSGAMEELKFELSGSDLYAARFGETIANLGDIDNDGFEDVAIAAPQEGDLEGAVYIYNGREKGITPSFSQRLQGSKFGYGLRMFGQSLSNVLDIDGNGYQDVAIGAFLSDSAVLLRTRPVIIIDAFLKLPSTVNKTKFECMENGVAVVCMNVTVCFAYQGLDVPGYIVMFYNITSDVRRKSGTPARFYFVSNGSSDVISGTVEIRQKSANCKTHQAFMRKDTRDIFTPIHMESSYYLGKHIVSKRSADDFQPLQPVLQQKEGKGNVITNKVYFARYCNLPNCSADLQITGKRSFPKPFESKTYLAVGGMKSLMINITLFNGGDDAFQTVLRLRLPKGLYFVKVFDLLEKEINCAVNKEENEQTRLDCSVGHFYVDAFSKQEFSFLLDSSALIRAEEDLVINATVACANELIQDTMWNNEVSFIVPTRYEIDLNVLGTVSPFSFVFGPREDKPDDSCIMEEIEYTFNVINAGSSLVPAAKLQISLPNTFAPNDIKLFNILAVKTTVGECYFDNSTRDCETPKNTRSKIGDLFAFFSRPDKRWLYCIKDDPSCLQILCLFGDMERESKATVEVQLEISHSHLERDEAMLIQFFTTAQAGFEDSFKIINLNQDHHAYVVLEALHNLKPKKHVIYMIIGISLLLGILLFSLLTYILWKVGFFRRKYQPIGTEETSRRESWNYLNKDEKEVK.

The first 34 residues, 1–34 (MIRDLGKVGKVSLLLDHIWTGILLYTVILTPADC), serve as a signal peptide directing secretion. The Extracellular portion of the chain corresponds to 35-974 (YNIDESSPML…LHNLKPKKHV (940 aa)). FG-GAP repeat units follow at residues 36–100 (NIDE…PNRT), 113–177 (KCGK…TELS), 186–237 (DHVR…TIKS), 238–291 (YVDL…EKQL), 292–351 (TILF…GAME), 353–411 (LKFE…GITP), and 415–477 (QRLQ…LPST). N-linked (GlcNAc...) asparagine glycans are attached at residues asparagine 81 and asparagine 98. Intrachain disulfides connect cysteine 91-cysteine 101, cysteine 144-cysteine 165, and cysteine 183-cysteine 198. A glycan (N-linked (GlcNAc...) asparagine) is linked at asparagine 229. Residues aspartate 314, asparagine 316, aspartate 318, leucine 320, aspartate 322, aspartate 376, aspartate 378, aspartate 380, aspartate 384, aspartate 438, aspartate 440, asparagine 442, tyrosine 444, and aspartate 446 each contribute to the Ca(2+) site. Asparagine 479 carries an N-linked (GlcNAc...) asparagine glycan. Cysteines 485 and 494 form a disulfide. Asparagine 496, asparagine 517, asparagine 537, asparagine 626, and asparagine 660 each carry an N-linked (GlcNAc...) asparagine glycan. Intrachain disulfides connect cysteine 500–cysteine 556 and cysteine 622–cysteine 627. Cysteine 698 and cysteine 712 are joined by a disulfide. N-linked (GlcNAc...) asparagine glycans are attached at residues asparagine 746 and asparagine 857. Intrachain disulfides connect cysteine 853-cysteine 889 and cysteine 896-cysteine 901. A helical transmembrane segment spans residues 975–998 (IYMIIGISLLLGILLFSLLTYILW). Topologically, residues 999-1032 (KVGFFRRKYQPIGTEETSRRESWNYLNKDEKEVK) are cytoplasmic. Positions 1001–1005 (GFFRR) match the GFFKR motif motif.

Belongs to the integrin alpha chain family. Heterodimer of an alpha and a beta subunit.

The protein resides in the membrane. Fibronectin and V-CAM adhesion receptor. This is Integrin alpha-4 (itga4) from Xenopus laevis (African clawed frog).